The following is a 1303-amino-acid chain: Protein STU1 (1303 aa).

3 disordered regions span residues 239–259, 531–664, and 953–977; these read RGSD…NTPV, SQRE…GAVS, and EASD…NSEH. A compositionally biased stretch (polar residues) spans 249–259; that stretch reads RANTPRSNTPV. Residues 554–568 are compositionally biased toward basic and acidic residues; that stretch reads SLKEAILEKNKELRQ. Residues 573–583 are compositionally biased toward polar residues; the sequence is SRNSGEQSTKI. The span at 596 to 609 shows a compositional bias: basic and acidic residues; that stretch reads SRLEKSLLRPDVGH. Over residues 618–629 the composition is skewed to polar residues; that stretch reads SSWTYPSTQSGP. Residues 634–648 show a composition bias toward basic and acidic residues; that stretch reads KQRERSKTEVHKKSP. Polar residues-rich tracts occupy residues 653-664 and 955-972; these read RPSSRLDTGAVS and SDSS…SSKR.

Belongs to the CLASP family. As to quaternary structure, interacts with microtubules.

It localises to the cytoplasm. Its subcellular location is the cytoskeleton. The protein localises to the nucleus. The protein resides in the spindle. Functionally, microtubule binding protein that promotes the stabilization of dynamic microtubules. Required for mitotic spindle formation. The chain is Protein STU1 (STU1) from Candida albicans (strain SC5314 / ATCC MYA-2876) (Yeast).